Reading from the N-terminus, the 454-residue chain is tRNA modification GTPase MnmE (454 aa).

The (6S)-5-formyl-5,6,7,8-tetrahydrofolate site is built by arginine 23, glutamate 80, and lysine 120. In terms of domain architecture, TrmE-type G spans 216-377; that stretch reads GMKVVIAGRP…LRNHLKQSMG (162 aa). Asparagine 226 serves as a coordination point for K(+). GTP is bound by residues 226-231, 245-251, 270-273, 335-338, and 358-360; these read NAGKSS, TDIAGTT, DTAG, NKAD, and SAR. Serine 230 is a Mg(2+) binding site. Residues threonine 245, isoleucine 247, and threonine 250 each contribute to the K(+) site. Threonine 251 provides a ligand contact to Mg(2+). Lysine 454 provides a ligand contact to (6S)-5-formyl-5,6,7,8-tetrahydrofolate.

It belongs to the TRAFAC class TrmE-Era-EngA-EngB-Septin-like GTPase superfamily. TrmE GTPase family. As to quaternary structure, homodimer. Heterotetramer of two MnmE and two MnmG subunits. It depends on K(+) as a cofactor.

It is found in the cytoplasm. Its function is as follows. Exhibits a very high intrinsic GTPase hydrolysis rate. Involved in the addition of a carboxymethylaminomethyl (cmnm) group at the wobble position (U34) of certain tRNAs, forming tRNA-cmnm(5)s(2)U34. This is tRNA modification GTPase MnmE from Salmonella typhimurium (strain LT2 / SGSC1412 / ATCC 700720).